A 551-amino-acid chain; its full sequence is High-affinity glucose transporter (551 aa).

At 1-27 (MSLKNWLLLRDIQYEGTFYKKFPHVYN) the chain is on the cytoplasmic side. Residues 28–48 (IYVIGFIACISGLMFGFDIAS) traverse the membrane as a helical segment. At 49–70 (MSSMIGTDVYKDYFSNPDSLTY) the chain is on the extracellular side. Residues 71–91 (GGITASMAGGSFLGSLISPNF) traverse the membrane as a helical segment. At 92–98 (SDAFGRK) the chain is on the cytoplasmic side. The helical transmembrane segment at 99-119 (VSLHICAALWIIGAILQCAAQ) threads the bilayer. Over 120-123 (DQAM) the chain is Extracellular. Residues 124 to 144 (LIVGRVISGMGIGFGSSAAPV) form a helical membrane-spanning segment. Over 145–155 (YCSEISPPKIR) the chain is Cytoplasmic. The helical transmembrane segment at 156–176 (GTISGLFQFSVTVGIMVLFYI) threads the bilayer. At 177-190 (GYGCHFIDGAAAFR) the chain is on the extracellular side. A helical transmembrane segment spans residues 191-211 (ITWGLQMVPGLILMVGVFFIP). The Cytoplasmic portion of the chain corresponds to 212–289 (ESPRWLANHD…VGVSAQMWQQ (78 aa)). Residues 290 to 310 (LCGMNVMMYYIVYIFNMAGYT) form a helical membrane-spanning segment. Topologically, residues 311 to 315 (GNTNL) are extracellular. The chain crosses the membrane as a helical span at residues 316 to 336 (VASSIQYVLNVVMTIPALFLI). At 337 to 343 (DKFGRRP) the chain is on the cytoplasmic side. Residues 344–364 (VLIIGGIFMFTWLFSVAGILA) form a helical membrane-spanning segment. The Extracellular segment spans residues 365 to 395 (TYSVPAPGGVNGDDTVTIQIPSENTSAANGV). N-linked (GlcNAc...) asparagine glycosylation is present at Asn388. The chain crosses the membrane as a helical span at residues 396-416 (IASSYLFVCFFAPTWGIGIWI). At 417 to 432 (YCSEIFNNMERAKGSA) the chain is on the cytoplasmic side. Residues 433–453 (LSAATNWAFNFALAMFVPSAF) traverse the membrane as a helical segment. Residues 454-459 (KNISWK) are Extracellular-facing. A helical transmembrane segment spans residues 460–480 (TYIIFGVFSVALTIQTFFMFP). The Cytoplasmic segment spans residues 481 to 551 (ETKGKTLEEI…DRSDSASNSN (71 aa)).

Belongs to the major facilitator superfamily. Sugar transporter (TC 2.A.1.1) family.

The protein resides in the membrane. Functionally, high-affinity glucose transporter. This Kluyveromyces lactis (strain ATCC 8585 / CBS 2359 / DSM 70799 / NBRC 1267 / NRRL Y-1140 / WM37) (Yeast) protein is High-affinity glucose transporter (HGT1).